A 159-amino-acid chain; its full sequence is UPF0699 transmembrane protein YdbS (159 aa).

A run of 2 helical transmembrane segments spans residues 22–42 (IIIS…SYYF) and 47–67 (WISG…VFII).

The protein belongs to the UPF0699 family.

The protein localises to the cell membrane. This chain is UPF0699 transmembrane protein YdbS (ydbS), found in Bacillus subtilis (strain 168).